The primary structure comprises 346 residues: Ribosomal RNA small subunit methyltransferase H (346 aa).

Residues 47-49 (GGY), Asp-65, Phe-92, Asp-113, and Gln-120 each bind S-adenosyl-L-methionine. The span at 270–279 (RGEAPSRRLP) shows a compositional bias: basic and acidic residues. The segment at 270-346 (RGEAPSRRLP…ALPQRAAKGR (77 aa)) is disordered.

Belongs to the methyltransferase superfamily. RsmH family.

The protein resides in the cytoplasm. The enzyme catalyses cytidine(1402) in 16S rRNA + S-adenosyl-L-methionine = N(4)-methylcytidine(1402) in 16S rRNA + S-adenosyl-L-homocysteine + H(+). Its function is as follows. Specifically methylates the N4 position of cytidine in position 1402 (C1402) of 16S rRNA. This is Ribosomal RNA small subunit methyltransferase H from Methylocella silvestris (strain DSM 15510 / CIP 108128 / LMG 27833 / NCIMB 13906 / BL2).